We begin with the raw amino-acid sequence, 67 residues long: Probable Sec-independent protein translocase protein TatE (67 aa).

A helical membrane pass occupies residues 4–21 (ISITKLLVIAALVVLLFG). The segment at 44–67 (NDDDTGAKTPAASEAPAERLSHKE) is disordered.

It belongs to the TatA/E family. TatE subfamily.

The protein localises to the cell inner membrane. Functionally, part of the twin-arginine translocation (Tat) system that transports large folded proteins containing a characteristic twin-arginine motif in their signal peptide across membranes. TatE shares overlapping functions with TatA. The protein is Probable Sec-independent protein translocase protein TatE of Cronobacter sakazakii (strain ATCC BAA-894) (Enterobacter sakazakii).